The sequence spans 310 residues: Methionyl-tRNA formyltransferase (310 aa).

A (6S)-5,6,7,8-tetrahydrofolate-binding site is contributed by 110–113 (SLLP).

This sequence belongs to the Fmt family.

It catalyses the reaction L-methionyl-tRNA(fMet) + (6R)-10-formyltetrahydrofolate = N-formyl-L-methionyl-tRNA(fMet) + (6S)-5,6,7,8-tetrahydrofolate + H(+). Functionally, attaches a formyl group to the free amino group of methionyl-tRNA(fMet). The formyl group appears to play a dual role in the initiator identity of N-formylmethionyl-tRNA by promoting its recognition by IF2 and preventing the misappropriation of this tRNA by the elongation apparatus. The sequence is that of Methionyl-tRNA formyltransferase from Clostridium acetobutylicum (strain ATCC 824 / DSM 792 / JCM 1419 / IAM 19013 / LMG 5710 / NBRC 13948 / NRRL B-527 / VKM B-1787 / 2291 / W).